A 251-amino-acid chain; its full sequence is 5'-nucleotidase SurE (251 aa).

Residues aspartate 8, aspartate 9, serine 39, and asparagine 90 each coordinate a divalent metal cation.

This sequence belongs to the SurE nucleotidase family. The cofactor is a divalent metal cation.

The protein localises to the cytoplasm. It carries out the reaction a ribonucleoside 5'-phosphate + H2O = a ribonucleoside + phosphate. Its function is as follows. Nucleotidase that shows phosphatase activity on nucleoside 5'-monophosphates. The chain is 5'-nucleotidase SurE from Colwellia psychrerythraea (strain 34H / ATCC BAA-681) (Vibrio psychroerythus).